A 259-amino-acid chain; its full sequence is Aminoglycoside 3'-phosphotransferase (259 aa).

The Proton acceptor role is filled by Asp187.

This sequence belongs to the aminoglycoside phosphotransferase family.

The enzyme catalyses kanamycin A + ATP = kanamycin 3'-phosphate + ADP + H(+). Its function is as follows. Resistance to kanamycin and structurally-related aminoglycosides, including amikacin. In Acinetobacter baumannii, this protein is Aminoglycoside 3'-phosphotransferase (aphA-6).